The sequence spans 406 residues: Kelch domain-containing protein 2 (406 aa).

6 Kelch repeats span residues 31–85 (ERSG…NTEG), 92–136 (SGSC…ERID), 148–207 (LGVW…IWSQ), 221–259 (HACATVGNKGFVFGGRYRDARMNDLHYLNLDTWEWNELI), 271–311 (HSLT…IKFN), and 322–359 (HTACASDEGEVIVFGGCANNLLVHHRAAHSNEILIFSV).

As to quaternary structure, component of a CRL2(KLHDC2) E3 ubiquitin-protein ligase complex, also named ECS(KLHDC2) complex, composed of CUL2, Elongin BC (ELOB and ELOC), RBX1 and substrate-specific adapter KLHDC2. May form oligomers as a KLHDC2-ELOB-ELOC complex; this interaction is autoinhibitory for the E3 ligase complex as the substrate-binding site of KLHDC2 is blocked in the oligomer. Interacts with CREB3; interaction is direct and specific as it does not interact with CREB1, ATF4, ATF6, JUN, FOS, CEBPA or herpes simplex virus transactivator VP16. Post-translationally, autoubiquitinated by the CRL2(KLHDC2) E3 ligase complex.

It is found in the nucleus. It functions in the pathway protein modification; protein ubiquitination. Functionally, substrate-recognition component of a Cul2-RING (CRL2) E3 ubiquitin-protein ligase complex of the DesCEND (destruction via C-end degrons) pathway, which recognizes a C-degron located at the extreme C terminus of target proteins, leading to their ubiquitination and degradation. The C-degron recognized by the DesCEND pathway is usually a motif of less than ten residues and can be present in full-length proteins, truncated proteins or proteolytically cleaved forms. The CRL2(KLHDC2) complex specifically recognizes proteins with a diglycine (Gly-Gly) at the C-terminus, leading to their ubiquitination and degradation. The CRL2(KLHDC2) complex mediates ubiquitination and degradation of truncated SELENOK and SELENOS selenoproteins produced by failed UGA/Sec decoding, which end with a diglycine. The CRL2(KLHDC2) complex also recognizes proteolytically cleaved proteins ending with Gly-Gly, such as the N-terminal fragment of USP1, leading to their degradation. May also act as an indirect repressor of CREB3-mediated transcription by interfering with CREB3-DNA-binding. This is Kelch domain-containing protein 2 from Bos taurus (Bovine).